Here is a 504-residue protein sequence, read N- to C-terminus: Cytochrome P450 3A16 (504 aa).

Cysteine 443 contacts heme.

The protein belongs to the cytochrome P450 family. Heme serves as cofactor.

It is found in the endoplasmic reticulum membrane. The protein resides in the microsome membrane. The catalysed reaction is an organic molecule + reduced [NADPH--hemoprotein reductase] + O2 = an alcohol + oxidized [NADPH--hemoprotein reductase] + H2O + H(+). Cytochromes P450 are a group of heme-thiolate monooxygenases. In liver microsomes, this enzyme is involved in an NADPH-dependent electron transport pathway. It oxidizes a variety of structurally unrelated compounds, including steroids, fatty acids, and xenobiotics. This is Cytochrome P450 3A16 (Cyp3a16) from Mus musculus (Mouse).